The sequence spans 205 residues: Outer-membrane lipoprotein LolB (205 aa).

An N-terminal signal peptide occupies residues 1-17 (MFLRHCITFTLIALLAG). Cys-18 carries the N-palmitoyl cysteine lipid modification. Cys-18 carries S-diacylglycerol cysteine lipidation.

The protein belongs to the LolB family. In terms of assembly, monomer.

Its subcellular location is the cell outer membrane. Plays a critical role in the incorporation of lipoproteins in the outer membrane after they are released by the LolA protein. In Pseudomonas putida (strain GB-1), this protein is Outer-membrane lipoprotein LolB.